The following is a 482-amino-acid chain: Proton extrusion protein PxcA (482 aa).

Transmembrane regions (helical) follow at residues Phe265 to Ile285, Pro359 to Leu379, Ile406 to Ile426, and Phe442 to Ile462.

It belongs to the CemA family.

The protein localises to the cell inner membrane. Functionally, required for H(+) efflux immediately after light irradiation to form a rapid H(+) concentration gradient across the thylakoid membranes. Together with PxcL, contributes to transient H(+) uptake following dark to light transition. This chain is Proton extrusion protein PxcA, found in Acaryochloris marina (strain MBIC 11017).